The following is a 116-amino-acid chain: Protein Wnt-5b (116 aa).

The O-palmitoleoyl serine; by PORCN moiety is linked to residue Ser1. N-linked (GlcNAc...) asparagine glycans are attached at residues Asn69 and Asn83. Residues Cys82 and Cys97 are joined by a disulfide bond.

This sequence belongs to the Wnt family. Palmitoleoylation is required for efficient binding to frizzled receptors. Depalmitoleoylation leads to Wnt signaling pathway inhibition.

The protein resides in the secreted. Its subcellular location is the extracellular space. The protein localises to the extracellular matrix. In terms of biological role, ligand for members of the frizzled family of seven transmembrane receptors. Probable developmental protein. May be a signaling molecule which affects the development of discrete regions of tissues. Is likely to signal over only few cell diameters. The polypeptide is Protein Wnt-5b (WNT-5B) (Plestiodon skiltonianus (Western skink)).